Consider the following 101-residue polypeptide: Co-chaperonin GroES (101 aa).

The protein belongs to the GroES chaperonin family. In terms of assembly, heptamer of 7 subunits arranged in a ring. Interacts with the chaperonin GroEL.

Its subcellular location is the cytoplasm. In terms of biological role, together with the chaperonin GroEL, plays an essential role in assisting protein folding. The GroEL-GroES system forms a nano-cage that allows encapsulation of the non-native substrate proteins and provides a physical environment optimized to promote and accelerate protein folding. GroES binds to the apical surface of the GroEL ring, thereby capping the opening of the GroEL channel. This Thermus thermophilus (strain ATCC BAA-163 / DSM 7039 / HB27) protein is Co-chaperonin GroES.